A 198-amino-acid chain; its full sequence is tRNA (pseudouridine(54)-N(1))-methyltransferase (198 aa).

S-adenosyl-L-methionine is bound at residue leucine 128.

This sequence belongs to the methyltransferase superfamily. TrmY family. In terms of assembly, homodimer.

The protein resides in the cytoplasm. It carries out the reaction pseudouridine(54) in tRNA + S-adenosyl-L-methionine = N(1)-methylpseudouridine(54) in tRNA + S-adenosyl-L-homocysteine + H(+). Its function is as follows. Specifically catalyzes the N1-methylation of pseudouridine at position 54 (Psi54) in tRNAs. This is tRNA (pseudouridine(54)-N(1))-methyltransferase from Haloarcula marismortui (strain ATCC 43049 / DSM 3752 / JCM 8966 / VKM B-1809) (Halobacterium marismortui).